We begin with the raw amino-acid sequence, 267 residues long: 7alpha-hydroxysteroid dehydrogenase (267 aa).

Residues 13–18 (SATRGI), Arg38, 63–64 (DA), and Asn90 contribute to the NADP(+) site. 2 residues coordinate cholate: Ser145 and Tyr158. NADP(+) contacts are provided by residues Tyr158, Lys162, and 191–195 (IATDA). The Proton acceptor role is filled by Tyr158.

The protein belongs to the short-chain dehydrogenases/reductases (SDR) family. Homotetramer.

It carries out the reaction cholate + NADP(+) = 3alpha,12alpha-dihydroxy-7-oxo-5beta-cholanate + NADPH + H(+). The catalysed reaction is chenodeoxycholate + NADP(+) = 7-oxolithocholate + NADPH + H(+). 7alpha-hydroxysteroid dehydrogenase that catalyzes the NADP(+)-dependent oxidation of the 7alpha-hydroxy group of 7alpha-hydroxysteroids, such as the major human bile acids cholate and chenodeoxycholate, to the corresponding 7-oxosteroids. Is thus liley involved in the metabolism of primary bile acids. The sequence is that of 7alpha-hydroxysteroid dehydrogenase from Paraclostridium sordellii (Clostridium sordellii).